Reading from the N-terminus, the 156-residue chain is Ribosomal RNA large subunit methyltransferase H (156 aa).

S-adenosyl-L-methionine contacts are provided by residues leucine 73, glycine 104, and 123 to 128 (LSSLTL).

It belongs to the RNA methyltransferase RlmH family. Homodimer.

The protein localises to the cytoplasm. The enzyme catalyses pseudouridine(1915) in 23S rRNA + S-adenosyl-L-methionine = N(3)-methylpseudouridine(1915) in 23S rRNA + S-adenosyl-L-homocysteine + H(+). In terms of biological role, specifically methylates the pseudouridine at position 1915 (m3Psi1915) in 23S rRNA. The protein is Ribosomal RNA large subunit methyltransferase H of Neisseria gonorrhoeae (strain NCCP11945).